We begin with the raw amino-acid sequence, 376 residues long: Alcohol dehydrogenase class-3 (376 aa).

At A1 the chain carries N-acetylalanine. Residues C47, H69, C99, C102, C105, C113, and C176 each contribute to the Zn(2+) site.

This sequence belongs to the zinc-containing alcohol dehydrogenase family. Class-III subfamily. In terms of assembly, homodimer. The cofactor is Zn(2+).

It is found in the cytoplasm. The catalysed reaction is a primary alcohol + NAD(+) = an aldehyde + NADH + H(+). It catalyses the reaction a secondary alcohol + NAD(+) = a ketone + NADH + H(+). It carries out the reaction S-(hydroxymethyl)glutathione + NADP(+) = S-formylglutathione + NADPH + H(+). The enzyme catalyses S-(hydroxymethyl)glutathione + NAD(+) = S-formylglutathione + NADH + H(+). The catalysed reaction is S-nitrosoglutathione + NADH + H(+) = S-(hydroxysulfenamide)glutathione + NAD(+). Class-III ADH is remarkably ineffective in oxidizing ethanol, but it readily catalyzes the oxidation of long-chain primary alcohols and the oxidation of S-(hydroxymethyl) glutathione. Also acts as a S-nitroso-glutathione reductase by catalyzing the NADH-dependent reduction of S-nitrosoglutathione, thereby regulating protein S-nitrosylation. This Scyliorhinus canicula (Small-spotted catshark) protein is Alcohol dehydrogenase class-3.